We begin with the raw amino-acid sequence, 399 residues long: Ribose-phosphate pyrophosphokinase 2, chloroplastic (399 aa).

The transit peptide at 1-32 directs the protein to the chloroplast; it reads MAAKAAALSSSPFVSSRRLSSPAASLRARTPR. D214, H216, D225, and D229 together coordinate Mg(2+). A binding of phosphoribosylpyrophosphate region spans residues 299–314; it reads GKVAIMVDDMIDTAGT.

The protein belongs to the ribose-phosphate pyrophosphokinase family. The cofactor is Mg(2+).

It is found in the plastid. The protein localises to the chloroplast. The enzyme catalyses D-ribose 5-phosphate + ATP = 5-phospho-alpha-D-ribose 1-diphosphate + AMP + H(+). This Oryza sativa subsp. japonica (Rice) protein is Ribose-phosphate pyrophosphokinase 2, chloroplastic.